Consider the following 405-residue polypeptide: Phosphoglycerate kinase (405 aa).

Substrate contacts are provided by residues aspartate 21 to asparagine 23, arginine 36, histidine 59 to arginine 62, arginine 119, and arginine 161. Residues lysine 212, glycine 301, glutamate 332, and glycine 361 to serine 364 each bind ATP.

Belongs to the phosphoglycerate kinase family. As to quaternary structure, monomer.

It is found in the cytoplasm. The catalysed reaction is (2R)-3-phosphoglycerate + ATP = (2R)-3-phospho-glyceroyl phosphate + ADP. The protein operates within carbohydrate degradation; glycolysis; pyruvate from D-glyceraldehyde 3-phosphate: step 2/5. This is Phosphoglycerate kinase from Leuconostoc citreum (strain KM20).